Here is a 222-residue protein sequence, read N- to C-terminus: MGQESFIYSFVARGTMILAEYTEFTGNFPSIAAQCLQKLPSSSNSKFTYNCDHHTFNFLVEDGYAYCVVAKDSLSKQISIAFLERVKADFKKRYGGGKASTAIAKSLNKEFGPVMKEHMNYIVDHAEEIEKLIKVKAQVSEVKSIMLENIDKAIDRGENLTVLTDKTENLRSQAQEYKKQGTQVRRKLWYQNMKIKLVVLGILLLLVLIIWISVCHGFNCTD.

The Cytoplasmic segment spans residues 1–197 (MGQESFIYSF…LWYQNMKIKL (197 aa)). The 106-residue stretch at 10–115 (FVARGTMILA…SLNKEFGPVM (106 aa)) folds into the Longin domain. The region spanning 131–191 (KLIKVKAQVS…TQVRRKLWYQ (61 aa)) is the v-SNARE coiled-coil homology domain. A helical; Anchor for type IV membrane protein membrane pass occupies residues 198–218 (VVLGILLLLVLIIWISVCHGF). The Vesicular segment spans residues 219 to 222 (NCTD).

This sequence belongs to the synaptobrevin family. Expressed in flowers, leaves, stems and roots.

The protein resides in the cell membrane. It is found in the early endosome membrane. Its function is as follows. Involved in the targeting and/or fusion of transport vesicles to their target membrane. This is Vesicle-associated membrane protein 724 from Arabidopsis thaliana (Mouse-ear cress).